The following is a 378-amino-acid chain: Odorant receptor 33a (378 aa).

The Cytoplasmic portion of the chain corresponds to 1–33 (MDSRRKVRSENLYKTYWLYWRLLGVEGDYPFRR). The helical transmembrane segment at 34–54 (LVDFTITSFITILFPVHLILG) threads the bilayer. Residues 55–62 (MYKKPQIQ) are Extracellular-facing. Residues 63 to 83 (VFRSLHFTSECLFCSYKFFCF) traverse the membrane as a helical segment. Residues 84–127 (RWKLKEIKTIEGLLQDLDSRVESEEERNYFNQNPSRVARMLSKS) are Cytoplasmic-facing. A helical transmembrane segment spans residues 128-148 (YLVAAISAIITATVAGLFSTG). Residues 149–163 (RNLMYLGWFPYDFQA) are Extracellular-facing. The chain crosses the membrane as a helical span at residues 164 to 184 (TAAIYWISFSYQAIGSSLLIL). Residues 185 to 254 (ENLANDSYPP…LLRSTLHLSQ (70 aa)) lie on the Cytoplasmic side of the membrane. The chain crosses the membrane as a helical span at residues 255-275 (LGQFLSSGINISITLINILFF). The Extracellular segment spans residues 276 to 285 (AENNFAMLYY). The chain crosses the membrane as a helical span at residues 286–306 (AVFFAAMLIELFPSCYYGILM). The Cytoplasmic segment spans residues 307 to 355 (TMEFDKLPYAIFSSNWLKMDKRYNRSLIILMQLTLVPVNIKAGGIVGID). The helical transmembrane segment at 356–376 (MSAFFATVRMAYSFYTLALSF) threads the bilayer. The Extracellular segment spans residues 377–378 (RV).

This sequence belongs to the insect chemoreceptor superfamily. Heteromeric odorant receptor channel (TC 1.A.69) family. Or2a subfamily. As to quaternary structure, interacts with Orco. Complexes exist early in the endomembrane system in olfactory sensory neurons (OSNs), coupling these complexes to the conserved ciliary trafficking pathway. In terms of tissue distribution, expressed in 1-2 cells on the distal edge of the antenna but not the maxillary palp.

It localises to the cell membrane. Its function is as follows. Odorant receptor which mediates acceptance or avoidance behavior, depending on its substrates. The odorant receptor repertoire encodes a large collection of odor stimuli that vary widely in identity, intensity, and duration. May form a complex with Orco to form odorant-sensing units, providing sensitive and prolonged odorant signaling and calcium permeability. This Drosophila melanogaster (Fruit fly) protein is Odorant receptor 33a (Or33a).